Consider the following 109-residue polypeptide: Aquaporin-2 (109 aa).

At 1 to 6 the chain is on the cytoplasmic side; sequence SIAFSR. The helical transmembrane segment at 7–27 threads the bilayer; sequence AVFAEFLATLIFVFFGLGSAL. Topologically, residues 28–35 are extracellular; the sequence is NWQQSLPS. Residues 36-54 form a helical membrane-spanning segment; the sequence is VLQIAMAFGLAIGTLVQAL. At 55–59 the chain is on the cytoplasmic side; that stretch reads GHISG. An intramembrane region (discontinuously helical) is located at residues 60–69; that stretch reads AHINPAVTVA. Residues 63-65 carry the NPA 1 motif; it reads NPA. Topologically, residues 70 to 80 are cytoplasmic; sequence CLVGCHVSFLR. The helical transmembrane segment at 81–102 threads the bilayer; it reads AAFYVAAQLLGAVAGAALLHEV. Residues 103–109 lie on the Extracellular side of the membrane; sequence TPSDVRG.

It belongs to the MIP/aquaporin (TC 1.A.8) family. As to quaternary structure, homotetramer. Serine phosphorylation is necessary and sufficient for expression at the apical membrane. Endocytosis is not phosphorylation-dependent. In terms of processing, N-glycosylated.

It localises to the apical cell membrane. It is found in the basolateral cell membrane. The protein resides in the cell membrane. Its subcellular location is the cytoplasmic vesicle membrane. The protein localises to the golgi apparatus. It localises to the trans-Golgi network membrane. It carries out the reaction H2O(in) = H2O(out). It catalyses the reaction glycerol(in) = glycerol(out). Its function is as follows. Forms a water-specific channel that provides the plasma membranes of renal collecting duct with high permeability to water, thereby permitting water to move in the direction of an osmotic gradient. Plays an essential role in renal water homeostasis. Could also be permeable to glycerol. This chain is Aquaporin-2, found in Talpa europaea (European mole).